Here is a 398-residue protein sequence, read N- to C-terminus: 4-hydroxy-3-methylbut-2-enyl diphosphate reductase (398 aa).

C66 serves as a coordination point for [4Fe-4S] cluster. Residue H96 coordinates (2E)-4-hydroxy-3-methylbut-2-enyl diphosphate. Residue H96 participates in dimethylallyl diphosphate binding. Position 96 (H96) interacts with isopentenyl diphosphate. C157 provides a ligand contact to [4Fe-4S] cluster. H185 contacts (2E)-4-hydroxy-3-methylbut-2-enyl diphosphate. H185 provides a ligand contact to dimethylallyl diphosphate. H185 lines the isopentenyl diphosphate pocket. Catalysis depends on E187, which acts as the Proton donor. T250 contributes to the (2E)-4-hydroxy-3-methylbut-2-enyl diphosphate binding site. C288 is a binding site for [4Fe-4S] cluster. (2E)-4-hydroxy-3-methylbut-2-enyl diphosphate-binding residues include S317, S318, N319, and S379. Dimethylallyl diphosphate-binding residues include S317, S318, N319, and S379. Isopentenyl diphosphate is bound by residues S317, S318, N319, and S379.

The protein belongs to the IspH family. It depends on [4Fe-4S] cluster as a cofactor.

The catalysed reaction is isopentenyl diphosphate + 2 oxidized [2Fe-2S]-[ferredoxin] + H2O = (2E)-4-hydroxy-3-methylbut-2-enyl diphosphate + 2 reduced [2Fe-2S]-[ferredoxin] + 2 H(+). It catalyses the reaction dimethylallyl diphosphate + 2 oxidized [2Fe-2S]-[ferredoxin] + H2O = (2E)-4-hydroxy-3-methylbut-2-enyl diphosphate + 2 reduced [2Fe-2S]-[ferredoxin] + 2 H(+). The protein operates within isoprenoid biosynthesis; dimethylallyl diphosphate biosynthesis; dimethylallyl diphosphate from (2E)-4-hydroxy-3-methylbutenyl diphosphate: step 1/1. It participates in isoprenoid biosynthesis; isopentenyl diphosphate biosynthesis via DXP pathway; isopentenyl diphosphate from 1-deoxy-D-xylulose 5-phosphate: step 6/6. Catalyzes the conversion of 1-hydroxy-2-methyl-2-(E)-butenyl 4-diphosphate (HMBPP) into a mixture of isopentenyl diphosphate (IPP) and dimethylallyl diphosphate (DMAPP). Acts in the terminal step of the DOXP/MEP pathway for isoprenoid precursor biosynthesis. This is 4-hydroxy-3-methylbut-2-enyl diphosphate reductase from Prochlorococcus marinus (strain MIT 9313).